The primary structure comprises 163 residues: Nucleotide-binding protein MT0592 (163 aa).

This sequence belongs to the YajQ family.

In terms of biological role, nucleotide-binding protein. The polypeptide is Nucleotide-binding protein MT0592 (Mycobacterium tuberculosis (strain CDC 1551 / Oshkosh)).